The sequence spans 99 residues: Malonate decarboxylase acyl carrier protein (99 aa).

Ser-25 carries the O-(phosphoribosyl dephospho-coenzyme A)serine modification.

It belongs to the MdcC family. Post-translationally, covalently binds the prosthetic group of malonate decarboxylase.

Its subcellular location is the cytoplasm. In terms of biological role, subunit of malonate decarboxylase, it is an acyl carrier protein to which acetyl and malonyl thioester residues are bound via a 2'-(5''-phosphoribosyl)-3'-dephospho-CoA prosthetic group and turn over during the catalytic mechanism. The protein is Malonate decarboxylase acyl carrier protein of Pseudomonas fluorescens (strain Pf0-1).